The sequence spans 170 residues: Small ribosomal subunit protein uS5 (170 aa).

An S5 DRBM domain is found at 12-75 (LSELLVSVRR…NAAKKSMIRV (64 aa)).

Belongs to the universal ribosomal protein uS5 family. As to quaternary structure, part of the 30S ribosomal subunit. Contacts proteins S4 and S8.

In terms of biological role, with S4 and S12 plays an important role in translational accuracy. Located at the back of the 30S subunit body where it stabilizes the conformation of the head with respect to the body. This Wolbachia pipientis wMel protein is Small ribosomal subunit protein uS5.